The chain runs to 277 residues: Shikimate dehydrogenase (NADP(+)) (277 aa).

Shikimate-binding positions include 15–17 (SLS) and T62. The active-site Proton acceptor is K66. The shikimate site is built by N87 and D102. NADP(+) is bound by residues 127–131 (GAGGA) and I219. Y221 provides a ligand contact to shikimate. NADP(+) is bound at residue G242.

It belongs to the shikimate dehydrogenase family. In terms of assembly, homodimer.

The enzyme catalyses shikimate + NADP(+) = 3-dehydroshikimate + NADPH + H(+). Its pathway is metabolic intermediate biosynthesis; chorismate biosynthesis; chorismate from D-erythrose 4-phosphate and phosphoenolpyruvate: step 4/7. In terms of biological role, involved in the biosynthesis of the chorismate, which leads to the biosynthesis of aromatic amino acids. Catalyzes the reversible NADPH linked reduction of 3-dehydroshikimate (DHSA) to yield shikimate (SA). In Bacillus cytotoxicus (strain DSM 22905 / CIP 110041 / 391-98 / NVH 391-98), this protein is Shikimate dehydrogenase (NADP(+)).